Here is a 350-residue protein sequence, read N- to C-terminus: Flap endonuclease 1 (350 aa).

Residues 1 to 102 (MGVNLKDLIP…KEIEKRRKIR (102 aa)) form an N-domain region. Positions 31, 84, 156, 158, 177, 179, and 240 each coordinate Mg(2+). The I-domain stretch occupies residues 120–262 (AARRYAMMSA…KALQLVKAYK (143 aa)). Positions 341-349 (KQLGLEAWF) are interaction with PCNA.

Belongs to the XPG/RAD2 endonuclease family. FEN1 subfamily. Interacts with PCNA. PCNA stimulates the nuclease activity without altering cleavage specificity. Mg(2+) is required as a cofactor.

Functionally, structure-specific nuclease with 5'-flap endonuclease and 5'-3' exonuclease activities involved in DNA replication and repair. During DNA replication, cleaves the 5'-overhanging flap structure that is generated by displacement synthesis when DNA polymerase encounters the 5'-end of a downstream Okazaki fragment. Binds the unpaired 3'-DNA end and kinks the DNA to facilitate 5' cleavage specificity. Cleaves one nucleotide into the double-stranded DNA from the junction in flap DNA, leaving a nick for ligation. Also involved in the base excision repair (BER) pathway. Acts as a genome stabilization factor that prevents flaps from equilibrating into structures that lead to duplications and deletions. Also possesses 5'-3' exonuclease activity on nicked or gapped double-stranded DNA. The protein is Flap endonuclease 1 of Staphylothermus marinus (strain ATCC 43588 / DSM 3639 / JCM 9404 / F1).